The following is a 164-amino-acid chain: UPF0114 protein BCI_0033 (164 aa).

Transmembrane regions (helical) follow at residues 15–35, 53–73, and 136–156; these read LLFP…LKFF, LILI…LVMV, and IMWC…MAYI.

Belongs to the UPF0114 family.

It is found in the cell membrane. The sequence is that of UPF0114 protein BCI_0033 from Baumannia cicadellinicola subsp. Homalodisca coagulata.